Consider the following 828-residue polypeptide: Periplasmic nitrate reductase (828 aa).

The segment at residues 1–31 is a signal peptide (tat-type signal); it reads MKLSRRSFMKANAVAAAAAAAGLSVPGVARA. Residues 39–95 form the 4Fe-4S Mo/W bis-MGD-type domain; it reads IKWDKAPCRFCGTGCGVLVGTQQGRVVACQGDPDAPVNRGLNCIKGYFLPKIMYGKD. Residues cysteine 46, cysteine 49, cysteine 53, and cysteine 81 each contribute to the [4Fe-4S] cluster site. Residues lysine 83, glutamine 150, asparagine 175, cysteine 179, 212–219, 243–247, 262–264, methionine 372, glutamine 376, asparagine 482, 508–509, lysine 531, aspartate 558, and 718–727 each bind Mo-bis(molybdopterin guanine dinucleotide); these read WGANMAEM, STYQH, QSD, SD, and TGRVLEHWHT. Residue phenylalanine 794 coordinates substrate. The Mo-bis(molybdopterin guanine dinucleotide) site is built by asparagine 802 and lysine 819.

This sequence belongs to the prokaryotic molybdopterin-containing oxidoreductase family. NasA/NapA/NarB subfamily. In terms of assembly, component of the periplasmic nitrate reductase NapAB complex composed of NapA and NapB. [4Fe-4S] cluster is required as a cofactor. It depends on Mo-bis(molybdopterin guanine dinucleotide) as a cofactor. In terms of processing, predicted to be exported by the Tat system. The position of the signal peptide cleavage has not been experimentally proven.

Its subcellular location is the periplasm. It catalyses the reaction 2 Fe(II)-[cytochrome] + nitrate + 2 H(+) = 2 Fe(III)-[cytochrome] + nitrite + H2O. In terms of biological role, catalytic subunit of the periplasmic nitrate reductase complex NapAB. Receives electrons from NapB and catalyzes the reduction of nitrate to nitrite. This chain is Periplasmic nitrate reductase, found in Escherichia coli O9:H4 (strain HS).